The primary structure comprises 514 residues: Probable type III restriction-modification enzyme HindVIP Res subunit (514 aa).

This sequence belongs to the type III restriction-modification system Res protein family. In terms of assembly, contains two different subunits: Res and Mod. Mg(2+) serves as cofactor. Requires S-adenosyl-L-methionine as cofactor.

The enzyme catalyses Endonucleolytic cleavage of DNA to give specific double-stranded fragments with terminal 5'-phosphates.. Its function is as follows. A type III restriction enzyme that recognizes 2 inversely oriented double-stranded sequences 5'-CGAAT-3' and cleaves 25-27 base pairs downstream. After binding to one recognition site undergoes random one-dimensional diffusion along DNA until it collides with a stationary enzyme bound to the second DNA site, which is when DNA cleavage occurs. DNA restriction requires both the Res and Mod subunits. This chain is Probable type III restriction-modification enzyme HindVIP Res subunit, found in Haemophilus influenzae (strain ATCC 51907 / DSM 11121 / KW20 / Rd).